A 142-amino-acid chain; its full sequence is Hemoglobin subunit alpha (142 aa).

N-acetylserine is present on Ser1. The Globin domain occupies 1-142; sequence SLSDKDKADV…LALALGQKYR (142 aa). His58 is a binding site for O2. His88 contributes to the heme b binding site.

The protein belongs to the globin family. In terms of assembly, heterotetramer of two alpha chains and two beta chains. As to expression, red blood cells.

In terms of biological role, involved in oxygen transport from gills to the various peripheral tissues. The sequence is that of Hemoglobin subunit alpha (hba) from Catostomus clarkii (Desert sucker).